A 576-amino-acid chain; its full sequence is MNIHTLLSEKIQQALVAAGAPADCEAQVRQSAKAQFGDYQANGVMAIAKQLGLPPRKLAENVVGLLNLDGIARKVDIAGPGFINIFLEPSWLANHLAAALSSPRLGIASVASQTIVVDYSAPNVAKEMHVGHVRSTIIGDASVRTLSFLGHNVIRANHVGDWGTQFGMLIAYLEKVQDGGEAEMQLSSLESFYRAAKQHYDEDPAFAERARGYVVKLQGGDEYCRQMWRKLVDVTMAQNQKTYNRLNVTLTRADVMGESLYNDMLPGIVADLKAKGLAVESEGATVVFLDEFKNKEGEPMGVIIQKKDGAYLYTTTDIACAKYRYETLKADRIIYYIDSRQHQHLMLAWTIVRKAGYVPESVPLEHHMFGMMLGKDGKPFKTRAGGTIKLTELLDEALERARRLVAAKNPSMDAGELARLAQVVGIGAVKYADLSKSRTTDYVFDWDNMLSFEGNTAPYMQYAYTRVASIFKRSGQDEQQLTGDIRLEAEQETQLAVRLLQLEEAIATVARDGTPHVLCAYLYDLAVLFSAFYEHCPILNAENAALRQSRLQLALLTARTLKKGLDLLGIETVERM.

The short motif at 122 to 132 is the 'HIGH' region element; that stretch reads PNVAKEMHVGH.

Belongs to the class-I aminoacyl-tRNA synthetase family. In terms of assembly, monomer.

It localises to the cytoplasm. The enzyme catalyses tRNA(Arg) + L-arginine + ATP = L-arginyl-tRNA(Arg) + AMP + diphosphate. This Sodalis glossinidius (strain morsitans) protein is Arginine--tRNA ligase.